A 91-amino-acid chain; its full sequence is UPF0358 protein SERP0701 (91 aa).

It belongs to the UPF0358 family.

This Staphylococcus epidermidis (strain ATCC 35984 / DSM 28319 / BCRC 17069 / CCUG 31568 / BM 3577 / RP62A) protein is UPF0358 protein SERP0701.